The chain runs to 185 residues: UPF0301 protein Tbd_2579 (185 aa).

Belongs to the UPF0301 (AlgH) family.

The chain is UPF0301 protein Tbd_2579 from Thiobacillus denitrificans (strain ATCC 25259 / T1).